The sequence spans 435 residues: Cysteine--tRNA ligase (435 aa).

Cys-24 contributes to the Zn(2+) binding site. Positions 26–36 (PTVYDHIHIGN) match the 'HIGH' region motif. 3 residues coordinate Zn(2+): Cys-202, His-228, and Glu-232. The short motif at 260-264 (KMSKS) is the 'KMSKS' region element. Lys-263 contributes to the ATP binding site.

It belongs to the class-I aminoacyl-tRNA synthetase family. Monomer. Zn(2+) serves as cofactor.

It localises to the cytoplasm. The enzyme catalyses tRNA(Cys) + L-cysteine + ATP = L-cysteinyl-tRNA(Cys) + AMP + diphosphate. The protein is Cysteine--tRNA ligase of Mycoplasmoides gallisepticum (strain R(low / passage 15 / clone 2)) (Mycoplasma gallisepticum).